A 571-amino-acid chain; its full sequence is Proline--tRNA ligase (571 aa).

It belongs to the class-II aminoacyl-tRNA synthetase family. ProS type 1 subfamily. Homodimer.

It localises to the cytoplasm. It catalyses the reaction tRNA(Pro) + L-proline + ATP = L-prolyl-tRNA(Pro) + AMP + diphosphate. In terms of biological role, catalyzes the attachment of proline to tRNA(Pro) in a two-step reaction: proline is first activated by ATP to form Pro-AMP and then transferred to the acceptor end of tRNA(Pro). As ProRS can inadvertently accommodate and process non-cognate amino acids such as alanine and cysteine, to avoid such errors it has two additional distinct editing activities against alanine. One activity is designated as 'pretransfer' editing and involves the tRNA(Pro)-independent hydrolysis of activated Ala-AMP. The other activity is designated 'posttransfer' editing and involves deacylation of mischarged Ala-tRNA(Pro). The misacylated Cys-tRNA(Pro) is not edited by ProRS. The protein is Proline--tRNA ligase of Pseudomonas paraeruginosa (strain DSM 24068 / PA7) (Pseudomonas aeruginosa (strain PA7)).